Consider the following 1102-residue polypeptide: WASH complex subunit 4 (1102 aa).

The protein belongs to the SWIP family. In terms of assembly, component of the WASH complex.

Its subcellular location is the early endosome. Its function is as follows. Acts at least in part as component of the WASH complex which may regulate wash nucleation-promoting factor (NPF) activity and is required for its membrane targeting during endosomal sorting. During embryogenesis, not involved in the wash-dependent developmental migration of hemocytes anteriorly from the tail. The sequence is that of WASH complex subunit 4 from Drosophila melanogaster (Fruit fly).